The chain runs to 932 residues: 2-oxoglutarate dehydrogenase E1 component (932 aa).

Belongs to the alpha-ketoglutarate dehydrogenase family. Homodimer. Part of the 2-oxoglutarate dehydrogenase (OGDH) complex composed of E1 (2-oxoglutarate dehydrogenase), E2 (dihydrolipoamide succinyltransferase) and E3 (dihydrolipoamide dehydrogenase); the complex contains multiple copies of the three enzymatic components (E1, E2 and E3). Requires thiamine diphosphate as cofactor.

The catalysed reaction is N(6)-[(R)-lipoyl]-L-lysyl-[protein] + 2-oxoglutarate + H(+) = N(6)-[(R)-S(8)-succinyldihydrolipoyl]-L-lysyl-[protein] + CO2. Functionally, E1 component of the 2-oxoglutarate dehydrogenase (OGDH) complex which catalyzes the decarboxylation of 2-oxoglutarate, the first step in the conversion of 2-oxoglutarate to succinyl-CoA and CO(2). This Staphylococcus aureus (strain USA300) protein is 2-oxoglutarate dehydrogenase E1 component.